A 492-amino-acid polypeptide reads, in one-letter code: Cysteine--tRNA ligase (492 aa).

Position 27 (C27) interacts with Zn(2+). Residues 29 to 39 (VTVYDLCHLGH) carry the 'HIGH' region motif. Zn(2+) contacts are provided by C211, H236, and E240. The 'KMSKS' region motif lies at 268–272 (KMSKS). K271 lines the ATP pocket.

Belongs to the class-I aminoacyl-tRNA synthetase family. Monomer. Requires Zn(2+) as cofactor.

Its subcellular location is the cytoplasm. It catalyses the reaction tRNA(Cys) + L-cysteine + ATP = L-cysteinyl-tRNA(Cys) + AMP + diphosphate. The sequence is that of Cysteine--tRNA ligase from Prochlorococcus marinus (strain MIT 9515).